The sequence spans 1370 residues: DNA-directed RNA polymerase subunit beta (1370 aa).

This sequence belongs to the RNA polymerase beta chain family. In terms of assembly, the RNAP catalytic core consists of 2 alpha, 1 beta, 1 beta' and 1 omega subunit. When a sigma factor is associated with the core the holoenzyme is formed, which can initiate transcription.

It catalyses the reaction RNA(n) + a ribonucleoside 5'-triphosphate = RNA(n+1) + diphosphate. DNA-dependent RNA polymerase catalyzes the transcription of DNA into RNA using the four ribonucleoside triphosphates as substrates. The protein is DNA-directed RNA polymerase subunit beta of Verminephrobacter eiseniae (strain EF01-2).